A 73-amino-acid polypeptide reads, in one-letter code: MSKLGVLLTICLLLFPITALPMDGDQPADRLAERMQDNISSEEHPFEKRQRLCCGFPKSCRSRQCKPHRCCGR.

The N-terminal stretch at 1-19 is a signal peptide; sequence MSKLGVLLTICLLLFPITA. Residues 20-49 constitute a propeptide that is removed on maturation; it reads LPMDGDQPADRLAERMQDNISSEEHPFEKR. At Q50 the chain carries Pyrrolidone carboxylic acid. Disulfide bonds link C53–C65, C53–C70, C54–C70, C54–C71, C60–C65, and C60–C71. A 4-hydroxyproline modification is found at P57. P67 is modified (4-hydroxyproline). Cysteine amide is present on C71.

The protein belongs to the conotoxin M superfamily. In terms of processing, 3D-structure of 3 disulfide-bond connectivities isomers is described (PIIIA-1 (C1-C5, C2-C6, C3-C4), PIIIA-2 (C1-C4, C2-C5, C3-C6) and PIIIA-3 (C1-C2, C3-C4, C5-C6)). Only PIIIA-2 contains the cysteine connectivity described as typical for native mu-conotoxins. However, PIIIA-1 is more potent than PIIIA-2, suggesting another possible disulfid connectivity. For this reason, both connectivities have been indicated in features. In terms of tissue distribution, expressed by the venom duct.

It localises to the secreted. Functionally, mu-conotoxins block voltage-gated sodium channels (Nav). This toxin potently blocks rNav1.4/SCN4A (IC(50)=36-41 nM). It also moderately blocks rNav1.1/SCN1A (IC(50)=120 nM), rNav1.2/SCN2A (IC(50)=620 nM), rNav1.3/SCN3A (IC(50)=3.2 uM), mNav1.6/SCN8A (IC(50)=100 nM). This inhibition is reversible. The block of Nav1.1, Nav1.2, and Nav1.6 is modified when beta-subunits are coexpressed with alpha subunits. Hence, blocks of channels containing the beta-1 and beta-3 subunits are more potent (compared to channels without beta subunits), whereas blocks of channels containing the beta-2 and beta-4 are less potent (compared to channels without beta subunits). In vivo, this peptide causes flaccid paralysis in both mice and fish. The protein is Mu-conotoxin PIIIA of Conus purpurascens (Purple cone).